A 436-amino-acid chain; its full sequence is Hydrogenobyrinate a,c-diamide synthase (436 aa).

A GATase cobBQ-type domain is found at R244–A435. The Nucleophile role is filled by C327.

The protein belongs to the CobB/CbiA family. The cofactor is Mg(2+).

The catalysed reaction is hydrogenobyrinate + 2 L-glutamine + 2 ATP + 2 H2O = hydrogenobyrinate a,c-diamide + 2 L-glutamate + 2 ADP + 2 phosphate + 2 H(+). It functions in the pathway cofactor biosynthesis; adenosylcobalamin biosynthesis; cob(II)yrinate a,c-diamide from precorrin-2 (aerobic route): step 9/10. In terms of biological role, catalyzes the ATP-dependent amidation of the two carboxylate groups at positions a and c of hydrogenobyrinate, using either L-glutamine or ammonia as the nitrogen source. This is Hydrogenobyrinate a,c-diamide synthase from Brucella ovis (strain ATCC 25840 / 63/290 / NCTC 10512).